Here is a 126-residue protein sequence, read N- to C-terminus: Holo-[acyl-carrier-protein] synthase (126 aa).

Mg(2+) is bound by residues aspartate 9 and glutamate 58.

The protein belongs to the P-Pant transferase superfamily. AcpS family. Mg(2+) serves as cofactor.

It is found in the cytoplasm. The enzyme catalyses apo-[ACP] + CoA = holo-[ACP] + adenosine 3',5'-bisphosphate + H(+). Its function is as follows. Transfers the 4'-phosphopantetheine moiety from coenzyme A to a Ser of acyl-carrier-protein. In Yersinia enterocolitica serotype O:8 / biotype 1B (strain NCTC 13174 / 8081), this protein is Holo-[acyl-carrier-protein] synthase.